The primary structure comprises 498 residues: Alpha-amylase A (498 aa).

The signal sequence occupies residues 1-21; sequence MMVAWWSLFLYGLQVAAPALA. Cys-51 and Cys-59 are oxidised to a cystine. The substrate site is built by Gln-56 and Trp-104. Residue Asn-142 participates in Ca(2+) binding. Substrate is bound at residue His-143. Residues Cys-171 and Cys-185 are joined by a disulfide bond. Positions 183 and 196 each coordinate Ca(2+). Residue Asn-218 is glycosylated (N-linked (GlcNAc...) asparagine). Substrate is bound at residue Arg-225. Residues Asp-227, His-231, and Glu-251 each contribute to the Ca(2+) site. The active-site Nucleophile is Asp-227. 230–231 lines the substrate pocket; it reads KH. The active-site Proton donor is Glu-251. Gly-255 serves as a coordination point for substrate. Cys-261 and Cys-304 are disulfide-bonded. Residues Asp-318 and Arg-365 each coordinate substrate. A disulfide bridge links Cys-461 with Cys-496.

Belongs to the glycosyl hydrolase 13 family. The cofactor is Ca(2+).

It carries out the reaction Endohydrolysis of (1-&gt;4)-alpha-D-glucosidic linkages in polysaccharides containing three or more (1-&gt;4)-alpha-linked D-glucose units.. This chain is Alpha-amylase A (amyA), found in Aspergillus awamori (Black koji mold).